We begin with the raw amino-acid sequence, 364 residues long: D-alanine--D-alanine ligase (364 aa).

The region spanning 140–346 is the ATP-grasp domain; it reads KKLALLEGIP…YSQLIDKLIS (207 aa). Position 173–228 (173–228) interacts with ATP; sequence ESEFSYPVFVKPANSGSSVGISKAKDREDLVLAIHEAFLYDTKILIEQAINAREIE. Positions 299, 313, and 315 each coordinate Mg(2+).

The protein belongs to the D-alanine--D-alanine ligase family. Mg(2+) is required as a cofactor. Requires Mn(2+) as cofactor.

The protein localises to the cytoplasm. It catalyses the reaction 2 D-alanine + ATP = D-alanyl-D-alanine + ADP + phosphate + H(+). Its pathway is cell wall biogenesis; peptidoglycan biosynthesis. Functionally, cell wall formation. This chain is D-alanine--D-alanine ligase, found in Caldicellulosiruptor bescii (strain ATCC BAA-1888 / DSM 6725 / KCTC 15123 / Z-1320) (Anaerocellum thermophilum).